Consider the following 391-residue polypeptide: Phosphoglycerate kinase (391 aa).

Residues 21–23 (DLN), Arg-36, 59–62 (HLGR), Arg-113, and Arg-146 each bind substrate. Residues Lys-197, Glu-319, and 345-348 (GGDT) each bind ATP.

It belongs to the phosphoglycerate kinase family. Monomer.

Its subcellular location is the cytoplasm. It catalyses the reaction (2R)-3-phosphoglycerate + ATP = (2R)-3-phospho-glyceroyl phosphate + ADP. Its pathway is carbohydrate degradation; glycolysis; pyruvate from D-glyceraldehyde 3-phosphate: step 2/5. This is Phosphoglycerate kinase from Shewanella sediminis (strain HAW-EB3).